The chain runs to 229 residues: Putative N-acetylmannosamine-6-phosphate 2-epimerase (229 aa).

It belongs to the NanE family.

It catalyses the reaction an N-acyl-D-glucosamine 6-phosphate = an N-acyl-D-mannosamine 6-phosphate. It participates in amino-sugar metabolism; N-acetylneuraminate degradation; D-fructose 6-phosphate from N-acetylneuraminate: step 3/5. Its function is as follows. Converts N-acetylmannosamine-6-phosphate (ManNAc-6-P) to N-acetylglucosamine-6-phosphate (GlcNAc-6-P). This chain is Putative N-acetylmannosamine-6-phosphate 2-epimerase, found in Haemophilus ducreyi (strain 35000HP / ATCC 700724).